A 255-amino-acid polypeptide reads, in one-letter code: Pyrroloquinoline-quinone synthase (255 aa).

This sequence belongs to the PqqC family.

It carries out the reaction 6-(2-amino-2-carboxyethyl)-7,8-dioxo-1,2,3,4,7,8-hexahydroquinoline-2,4-dicarboxylate + 3 O2 = pyrroloquinoline quinone + 2 H2O2 + 2 H2O + H(+). The protein operates within cofactor biosynthesis; pyrroloquinoline quinone biosynthesis. Its function is as follows. Ring cyclization and eight-electron oxidation of 3a-(2-amino-2-carboxyethyl)-4,5-dioxo-4,5,6,7,8,9-hexahydroquinoline-7,9-dicarboxylic-acid to PQQ. In Cereibacter sphaeroides (strain ATCC 17029 / ATH 2.4.9) (Rhodobacter sphaeroides), this protein is Pyrroloquinoline-quinone synthase.